A 199-amino-acid chain; its full sequence is ATP-dependent Clp protease proteolytic subunit (199 aa).

Serine 102 functions as the Nucleophile in the catalytic mechanism. Histidine 127 is a catalytic residue.

Belongs to the peptidase S14 family. Component of the chloroplastic Clp protease core complex.

The protein localises to the plastid. It localises to the chloroplast stroma. It catalyses the reaction Hydrolysis of proteins to small peptides in the presence of ATP and magnesium. alpha-casein is the usual test substrate. In the absence of ATP, only oligopeptides shorter than five residues are hydrolyzed (such as succinyl-Leu-Tyr-|-NHMec, and Leu-Tyr-Leu-|-Tyr-Trp, in which cleavage of the -Tyr-|-Leu- and -Tyr-|-Trp bonds also occurs).. Functionally, cleaves peptides in various proteins in a process that requires ATP hydrolysis. Has a chymotrypsin-like activity. Plays a major role in the degradation of misfolded proteins. The chain is ATP-dependent Clp protease proteolytic subunit from Physcomitrium patens (Spreading-leaved earth moss).